The following is a 316-amino-acid chain: MSGQASPGAESRLLLVTGLSGAGKSTVLKVLEDLGWEVVDNLPLALLEALIDAPVKRGEAERPLAVGIDSRSRGFRPALLVRRIKELREGGGRDIQTLFLDCAGAELERRFSETRRRHPLAEDRPAADGIAREREMMEPLRRWAEHVVDTTNYSSNDLQQEVRQRFGEADDGEPVLNILSFGFARGLPRNADLVFDMRYLRNPHWDPALKPGTGLDPDVAAYVIADPAYEETVSQIERLILTLLPRYRAEGKSYVTIAFGCTGGRHRSVHVAARVAQTLRGSGYEPTLTHRNLDSAPQDGLEGKPPSAARASGGAR.

18-25 (GLSGAGKS) lines the ATP pocket. 69–72 (DSRS) lines the GTP pocket. Residues 283 to 316 (GYEPTLTHRNLDSAPQDGLEGKPPSAARASGGAR) are disordered.

It belongs to the RapZ-like family.

Its function is as follows. Displays ATPase and GTPase activities. The protein is Nucleotide-binding protein Sala_2050 of Sphingopyxis alaskensis (strain DSM 13593 / LMG 18877 / RB2256) (Sphingomonas alaskensis).